A 631-amino-acid chain; its full sequence is Phosphomethylpyrimidine synthase (631 aa).

Substrate-binding positions include asparagine 239, methionine 268, tyrosine 297, histidine 333, 353–355 (SRG), 394–397 (DGLR), and glutamate 433. Histidine 437 provides a ligand contact to Zn(2+). Tyrosine 460 contacts substrate. Histidine 501 is a Zn(2+) binding site. [4Fe-4S] cluster contacts are provided by cysteine 581, cysteine 584, and cysteine 589.

This sequence belongs to the ThiC family. In terms of assembly, homodimer. [4Fe-4S] cluster serves as cofactor.

It catalyses the reaction 5-amino-1-(5-phospho-beta-D-ribosyl)imidazole + S-adenosyl-L-methionine = 4-amino-2-methyl-5-(phosphooxymethyl)pyrimidine + CO + 5'-deoxyadenosine + formate + L-methionine + 3 H(+). The protein operates within cofactor biosynthesis; thiamine diphosphate biosynthesis. Functionally, catalyzes the synthesis of the hydroxymethylpyrimidine phosphate (HMP-P) moiety of thiamine from aminoimidazole ribotide (AIR) in a radical S-adenosyl-L-methionine (SAM)-dependent reaction. The sequence is that of Phosphomethylpyrimidine synthase from Escherichia coli O81 (strain ED1a).